Consider the following 320-residue polypeptide: Cytochrome f (320 aa).

The N-terminal stretch at 1 to 35 (MQTRNTFSWIREEITRSISVSLMIYIITWASISGA) is a signal peptide. Positions 36, 56, 59, and 60 each coordinate heme. Residues 286-306 (VQGLLFFLGSVVLAQIFLVLK) form a helical membrane-spanning segment.

It belongs to the cytochrome f family. In terms of assembly, the 4 large subunits of the cytochrome b6-f complex are cytochrome b6, subunit IV (17 kDa polypeptide, petD), cytochrome f and the Rieske protein, while the 4 small subunits are PetG, PetL, PetM and PetN. The complex functions as a dimer. Requires heme as cofactor.

It is found in the plastid. The protein localises to the chloroplast thylakoid membrane. Functionally, component of the cytochrome b6-f complex, which mediates electron transfer between photosystem II (PSII) and photosystem I (PSI), cyclic electron flow around PSI, and state transitions. The polypeptide is Cytochrome f (Capsella bursa-pastoris (Shepherd's purse)).